A 301-amino-acid polypeptide reads, in one-letter code: Ubiquinone biosynthesis protein COQ4, mitochondrial (301 aa).

Residues 1–46 (MEVTLKRSAALARQTTPLLRPLRPVATYPSNNNNNNNPTPQQRRPY) constitute a mitochondrion transit peptide. Positions 14–48 (QTTPLLRPLRPVATYPSNNNNNNNPTPQQRRPYSL) are disordered. Polar residues predominate over residues 38–48 (PTPQQRRPYSL). Residues histidine 185, aspartate 186, histidine 189, and glutamate 201 each contribute to the Zn(2+) site.

This sequence belongs to the COQ4 family. In terms of assembly, component of a multi-subunit COQ enzyme complex, composed of at least COQ3, COQ4, COQ5, COQ6, COQ7 and COQ9. The cofactor is Zn(2+).

Its subcellular location is the mitochondrion inner membrane. It catalyses the reaction a 4-hydroxy-3-methoxy-5-(all-trans-polyprenyl)benzoate + H(+) = a 2-methoxy-6-(all-trans-polyprenyl)phenol + CO2. The protein operates within cofactor biosynthesis; ubiquinone biosynthesis. Its function is as follows. Lyase that catalyzes the C1-decarboxylation of 4-hydroxy-3-methoxy-5-(all-trans-polyprenyl)benzoic acid into 2-methoxy-6-(all-trans-polyprenyl)phenol during ubiquinone biosynthesis. The sequence is that of Ubiquinone biosynthesis protein COQ4, mitochondrial from Podospora anserina (strain S / ATCC MYA-4624 / DSM 980 / FGSC 10383) (Pleurage anserina).